Reading from the N-terminus, the 126-residue chain is Ribosome-binding factor A (126 aa).

Belongs to the RbfA family. In terms of assembly, monomer. Binds 30S ribosomal subunits, but not 50S ribosomal subunits or 70S ribosomes.

The protein resides in the cytoplasm. In terms of biological role, one of several proteins that assist in the late maturation steps of the functional core of the 30S ribosomal subunit. Associates with free 30S ribosomal subunits (but not with 30S subunits that are part of 70S ribosomes or polysomes). Required for efficient processing of 16S rRNA. May interact with the 5'-terminal helix region of 16S rRNA. This is Ribosome-binding factor A from Treponema pallidum (strain Nichols).